The sequence spans 230 residues: Sperm-associated antigen 7 homolog (230 aa).

Positions 1-45 (MADLLGSILSSMEKPPTVHDQESRRKAREQAARLKKLEEDERRKK) are disordered. A compositionally biased stretch (basic and acidic residues) spans 16–45 (PTVHDQESRRKAREQAARLKKLEEDERRKK). Residues 46–109 (AEFRKKMEKE…ESRYVMLFKK (64 aa)) form the R3H domain. Residues 119–144 (EAYRKGEEWDPQKAEERRRLKEKAAL) are compositionally biased toward basic and acidic residues. 2 disordered regions span residues 119-169 (EAYR…KYSH) and 185-230 (ANRA…GSSV). Position 158 is a phosphoserine (serine 158). Residues 196-211 (NKRDTRSIEEAMNEIR) are compositionally biased toward basic and acidic residues.

The sequence is that of Sperm-associated antigen 7 homolog (spag7) from Danio rerio (Zebrafish).